The primary structure comprises 698 residues: Elongation factor G (698 aa).

Residues 10–285 enclose the tr-type G domain; sequence DKTRNIGIMA…GVVDYLPSPL (276 aa). Residues 19–26, 83–87, and 137–140 each bind GTP; these read AHIDAGKT, DTPGH, and NKMD.

Belongs to the TRAFAC class translation factor GTPase superfamily. Classic translation factor GTPase family. EF-G/EF-2 subfamily.

The protein localises to the cytoplasm. Catalyzes the GTP-dependent ribosomal translocation step during translation elongation. During this step, the ribosome changes from the pre-translocational (PRE) to the post-translocational (POST) state as the newly formed A-site-bound peptidyl-tRNA and P-site-bound deacylated tRNA move to the P and E sites, respectively. Catalyzes the coordinated movement of the two tRNA molecules, the mRNA and conformational changes in the ribosome. This chain is Elongation factor G, found in Lactobacillus johnsonii (strain CNCM I-12250 / La1 / NCC 533).